Reading from the N-terminus, the 1653-residue chain is Clathrin heavy chain (1653 aa).

The tract at residues 1 to 483 (MSDLPIEFTE…FDTTLALACY (483 aa)) is globular terminal domain. WD40-like repeat stretches follow at residues 23–66 (FLDF…KNMG), 67–107 (GDSA…LDEP), 108–152 (VIFW…ANLN), 153–198 (NTQI…QAID), 199–263 (GHVA…PDAT), 264–307 (NDFP…ITAE), and 308–336 (SVFT…VEIS). Residues 453–469 (EKWLKEDKLECSEELGD) are binding site for the uncoating ATPase, involved in lattice disassembly. Residues 484-527 (LRAGAHAKVISCLAELQQFEKIIPYCQKVGYQPNFLVLISSLIR) are flexible linker. Residues 528 to 1653 (SSPDRASEFA…SAMNVQPTGF (1126 aa)) are heavy chain arm. CHCR repeat units lie at residues 543–689 (NPET…QTVV), 692–834 (ATKF…DEAF), 839–978 (LQSV…QLID), 985–1130 (IPEL…IPDA), 1134–1275 (YIKA…FKLA), 1280–1426 (LNLI…SLLV), and 1429–1572 (LTSL…REGF). Residue Lys1107 forms a Glycyl lysine isopeptide (Lys-Gly) (interchain with G-Cter in ubiquitin) linkage. Residues 1219-1528 (AARLCYSAVS…LLYRRNKKWA (310 aa)) are involved in binding clathrin light chain.

Belongs to the clathrin heavy chain family. As to quaternary structure, clathrin triskelions, composed of 3 heavy chains and 3 light chains, are the basic subunits of the clathrin coat. Interacts with the auxilin-like clathrin uncoating factor SWA2. Interacts with INP53.

The protein localises to the cytoplasmic vesicle membrane. The protein resides in the membrane. Its subcellular location is the coated pit. In terms of biological role, clathrin is the major protein of the polyhedral coat of coated pits and vesicles. In yeast, it is involved in the retention of proteins in an intracellular membrane compartment, presumably the trans-Golgi. The sequence is that of Clathrin heavy chain (CHC1) from Saccharomyces cerevisiae (strain ATCC 204508 / S288c) (Baker's yeast).